The sequence spans 492 residues: MAVASRLAVARVAPDGGAAGRRRRRGRPVVAVPTAGRGRGGAVAASPPTEEAVQMTEPLTKEDLVAYLVSGCKPKENWRIGTEHEKFGFEVDTLRPIKYDQIRDILNGLAERFDWDKIVEENNVIGLKQGKQSISLEPGGQFELSGAPLETLHQTCAEVNSHLYQVKAVGEEMGIGFLGIGFQPKWALSDIPIMPKGRYEIMRNYMPKVGSLGLDMMFRTCTVQVNLDFSSEQDMIRKFHTGLALQPIATAIFANSPFKEGKPNGYLSLRSHIWTDTDNNRSGMLPFVFDDSFGFERYVDYALDVPMYFVYRNKKYIDCTGMSFRDFMVGKLPQAPGELPTLNDWENHLTTIFPEVRLKRYLEMRGADGGPWRRLCALPAFWVGLLYDEESLQSISDMTSDWTNEEREMLRRKVPVTGLKTPFRDGYVRDLAEEILQLSKNGLERRGYKEVGFLREVDAVISSGVTPAERLLNLYETKWQRSVDPVFQELLY.

Cysteine 156 and cysteine 376 form a disulfide bridge.

This sequence belongs to the carboxylate-amine ligase family. Glutamate--cysteine ligase type 2 subfamily. As to quaternary structure, homodimer or monomer when oxidized or reduced, respectively. The Cys-156-Cys-376 disulfide bridge is known to modulate the enzyme activity according to the redox status. The oxidized form constitutes the active enzyme.

The protein localises to the plastid. The protein resides in the chloroplast. The catalysed reaction is L-cysteine + L-glutamate + ATP = gamma-L-glutamyl-L-cysteine + ADP + phosphate + H(+). It participates in sulfur metabolism; glutathione biosynthesis; glutathione from L-cysteine and L-glutamate: step 1/2. This is Glutamate--cysteine ligase A, chloroplastic (GSH1-1) from Oryza sativa subsp. indica (Rice).